A 205-amino-acid chain; its full sequence is Probable 3'-5' exonuclease KapD (205 aa).

An Exonuclease domain is found at 6–173; the sequence is LLIIDFEFTM…DDALTAYKLF (168 aa). Residues aspartate 10, glutamate 12, and aspartate 104 each contribute to the Mg(2+) site. Glutamate 12 serves as the catalytic Proton acceptor. Glutamate 12 serves as a coordination point for AMP. Catalysis depends on histidine 160, which acts as the Proton acceptor. Histidine 160 lines the AMP pocket. A Mg(2+)-binding site is contributed by aspartate 165.

The cofactor is Mg(2+).

In terms of biological role, specifically inhibits the KinA pathway to sporulation. The polypeptide is Probable 3'-5' exonuclease KapD (kapD) (Bacillus subtilis (strain 168)).